The chain runs to 457 residues: Multidrug resistance protein MdtK (457 aa).

Transmembrane regions (helical) follow at residues 11-31, 53-73, 93-113, 127-147, 160-180, 188-208, 243-263, 276-296, 314-334, 357-377, 387-407, and 418-438; these read LLALAIPVILAQIAQTAMGFV, IWLPAILFGHGLLLALTPVIA, WLAGCVSVLIMFVLWNAGYII, AVGYLRALLWGAPGYLFFQVA, GMVIGFLGLLVNIPVNYIFIY, LGGVGCGVATAAVYWVMFIAM, LPIALALFFEVTLFAVVALLV, IALNFSSLMFVLPMSLAAAVT, AARTGLGVGVCMAVITAIFTV, LMLLAAVYQISDSIQVIGSGI, IFFITFTAYWVLGLPSGYILA, and PAGFWMGFIIGLTSAAIMMML.

It belongs to the multi antimicrobial extrusion (MATE) (TC 2.A.66.1) family. MdtK subfamily.

Its subcellular location is the cell inner membrane. In terms of biological role, multidrug efflux pump that functions probably as a Na(+)/drug antiporter. This Citrobacter koseri (strain ATCC BAA-895 / CDC 4225-83 / SGSC4696) protein is Multidrug resistance protein MdtK.